A 321-amino-acid chain; its full sequence is Queuosine 5'-phosphate N-glycosylase/hydrolase (321 aa).

The queuine site is built by F227, D229, and D296. D229 (nucleophile or transition state stabilizer) is an active-site residue.

Belongs to the QNG1 protein family.

The catalysed reaction is queuosine 5'-phosphate + H2O = queuine + D-ribose 5-phosphate. Catalyzes the hydrolysis of queuosine 5'-phosphate, releasing the nucleobase queuine (q). Is required for salvage of queuine from exogenous queuosine (Q) that is imported and then converted to queuosine 5'-phosphate intracellularly. The polypeptide is Queuosine 5'-phosphate N-glycosylase/hydrolase (Dictyostelium discoideum (Social amoeba)).